Consider the following 538-residue polypeptide: Protein PNS1 (538 aa).

The span at Met1–Gly54 shows a compositional bias: low complexity. The segment at Met1–Tyr67 is disordered. The Cytoplasmic portion of the chain corresponds to Met1–Asp88. The helical transmembrane segment at Leu89–Ala109 threads the bilayer. The Extracellular portion of the chain corresponds to Leu110–Thr137. Asn134 is a glycosylation site (N-linked (GlcNAc...) asparagine). A helical membrane pass occupies residues Val138 to Met158. Over Ala159 to Gln165 the chain is Cytoplasmic. Residues Phe166–Leu186 form a helical membrane-spanning segment. Topologically, residues Trp187–Trp191 are extracellular. Residues Ser192–Ile212 traverse the membrane as a helical segment. The Cytoplasmic segment spans residues Ser213–Ser239. The chain crosses the membrane as a helical span at residues Leu240–Ile260. The Extracellular segment spans residues Tyr261–Lys280. The helical transmembrane segment at Gly281–Leu301 threads the bilayer. At Lys302 to Ala335 the chain is on the cytoplasmic side. The helical transmembrane segment at Leu336 to Leu356 threads the bilayer. Residues Arg357 to Ser372 lie on the Extracellular side of the membrane. A helical membrane pass occupies residues Phe373–Val393. At Glu394–Cys434 the chain is on the cytoplasmic side. A helical transmembrane segment spans residues Leu435–Ala455. Residues Tyr456–Ala474 are Extracellular-facing. A helical membrane pass occupies residues Val475–Ile495. Residues Ser496–Arg538 lie on the Cytoplasmic side of the membrane.

Belongs to the CTL (choline transporter-like) family.

Its subcellular location is the cell membrane. Functionally, probably involved in transport through the plasma membrane. The polypeptide is Protein PNS1 (PNS1) (Gibberella zeae (strain ATCC MYA-4620 / CBS 123657 / FGSC 9075 / NRRL 31084 / PH-1) (Wheat head blight fungus)).